Here is a 466-residue protein sequence, read N- to C-terminus: Ribosomal protein uS12 methylthiotransferase RimO (466 aa).

The 112-residue stretch at 16–127 folds into the MTTase N-terminal domain; it reads PKVAFAHLGC…IVDVLQRVEA (112 aa). [4Fe-4S] cluster-binding residues include Cys25, Cys61, Cys90, Cys165, Cys169, and Cys172. In terms of domain architecture, Radical SAM core spans 151–380; sequence TTDQAVAYLK…MALQQPIAAE (230 aa). The 72-residue stretch at 383–454 folds into the TRAM domain; it reads QRWVGKTVDV…IYDLTGHIVG (72 aa).

The protein belongs to the methylthiotransferase family. RimO subfamily. Requires [4Fe-4S] cluster as cofactor.

Its subcellular location is the cytoplasm. The catalysed reaction is L-aspartate(89)-[ribosomal protein uS12]-hydrogen + (sulfur carrier)-SH + AH2 + 2 S-adenosyl-L-methionine = 3-methylsulfanyl-L-aspartate(89)-[ribosomal protein uS12]-hydrogen + (sulfur carrier)-H + 5'-deoxyadenosine + L-methionine + A + S-adenosyl-L-homocysteine + 2 H(+). In terms of biological role, catalyzes the methylthiolation of an aspartic acid residue of ribosomal protein uS12. The chain is Ribosomal protein uS12 methylthiotransferase RimO from Synechococcus sp. (strain CC9902).